Reading from the N-terminus, the 79-residue chain is Acyl carrier protein (79 aa).

The Carrier domain maps to 2–77 (SEIGERVKKI…DATKFLEKNA (76 aa)). Ser-37 carries the post-translational modification O-(pantetheine 4'-phosphoryl)serine.

This sequence belongs to the acyl carrier protein (ACP) family. In terms of processing, 4'-phosphopantetheine is transferred from CoA to a specific serine of apo-ACP by AcpS. This modification is essential for activity because fatty acids are bound in thioester linkage to the sulfhydryl of the prosthetic group.

The protein localises to the cytoplasm. The protein operates within lipid metabolism; fatty acid biosynthesis. Its function is as follows. Carrier of the growing fatty acid chain in fatty acid biosynthesis. This Afipia carboxidovorans (strain ATCC 49405 / DSM 1227 / KCTC 32145 / OM5) (Oligotropha carboxidovorans) protein is Acyl carrier protein.